A 166-amino-acid chain; its full sequence is Phosphopantetheine adenylyltransferase (166 aa).

Substrate is bound at residue S9. ATP contacts are provided by residues S9–Y10 and H17. The substrate site is built by K41, I75, and K89. ATP contacts are provided by residues G90–R92, E100, and L124–S130.

The protein belongs to the bacterial CoaD family. As to quaternary structure, homohexamer. Requires Mg(2+) as cofactor.

The protein resides in the cytoplasm. The enzyme catalyses (R)-4'-phosphopantetheine + ATP + H(+) = 3'-dephospho-CoA + diphosphate. It participates in cofactor biosynthesis; coenzyme A biosynthesis; CoA from (R)-pantothenate: step 4/5. Functionally, reversibly transfers an adenylyl group from ATP to 4'-phosphopantetheine, yielding dephospho-CoA (dPCoA) and pyrophosphate. The chain is Phosphopantetheine adenylyltransferase from Bifidobacterium longum (strain DJO10A).